A 156-amino-acid polypeptide reads, in one-letter code: Endoribonuclease YbeY (156 aa).

Zn(2+) is bound by residues His-122, His-126, and His-132.

The protein belongs to the endoribonuclease YbeY family. The cofactor is Zn(2+).

It localises to the cytoplasm. Its function is as follows. Single strand-specific metallo-endoribonuclease involved in late-stage 70S ribosome quality control and in maturation of the 3' terminus of the 16S rRNA. This Moorella thermoacetica (strain ATCC 39073 / JCM 9320) protein is Endoribonuclease YbeY.